The chain runs to 617 residues: Coiled-coil domain-containing protein 93 (617 aa).

Residues 1 to 16 show a composition bias toward basic and acidic residues; that stretch reads MVVPRGQEHRAPQEVE. The tract at residues 1–20 is disordered; the sequence is MVVPRGQEHRAPQEVETRED. Coiled coils occupy residues 285-474 and 546-614; these read DEIK…IDEV and LRQM…KLKA.

Belongs to the CCDC93 family.

It is found in the early endosome. Its function is as follows. May be involved in copper-dependent ATP7A trafficking between the trans-Golgi network and vesicles in the cell periphery. In Gallus gallus (Chicken), this protein is Coiled-coil domain-containing protein 93 (CCDC93).